Reading from the N-terminus, the 352-residue chain is Holliday junction branch migration complex subunit RuvB (352 aa).

The segment at 1 to 26 is disordered; sequence MIETDKLRAAAPERLISPQPADRQED. The large ATPase domain (RuvB-L) stretch occupies residues 4-193; that stretch reads TDKLRAAAPE…FGIVSRLEFY (190 aa). Residues leucine 32, arginine 33, glycine 74, lysine 77, threonine 78, threonine 79, 140–142, arginine 183, tyrosine 193, and arginine 230 contribute to the ATP site; that span reads EDF. Threonine 78 provides a ligand contact to Mg(2+). Positions 194-264 are small ATPAse domain (RuvB-S); sequence TPDELGFIVS…VADAALRMLD (71 aa). Residues 267 to 352 are head domain (RuvB-H); sequence SLGLDLMDRK…RPGGTDLFGG (86 aa). 2 residues coordinate DNA: arginine 322 and arginine 327.

This sequence belongs to the RuvB family. In terms of assembly, homohexamer. Forms an RuvA(8)-RuvB(12)-Holliday junction (HJ) complex. HJ DNA is sandwiched between 2 RuvA tetramers; dsDNA enters through RuvA and exits via RuvB. An RuvB hexamer assembles on each DNA strand where it exits the tetramer. Each RuvB hexamer is contacted by two RuvA subunits (via domain III) on 2 adjacent RuvB subunits; this complex drives branch migration. In the full resolvosome a probable DNA-RuvA(4)-RuvB(12)-RuvC(2) complex forms which resolves the HJ.

The protein localises to the cytoplasm. The enzyme catalyses ATP + H2O = ADP + phosphate + H(+). Functionally, the RuvA-RuvB-RuvC complex processes Holliday junction (HJ) DNA during genetic recombination and DNA repair, while the RuvA-RuvB complex plays an important role in the rescue of blocked DNA replication forks via replication fork reversal (RFR). RuvA specifically binds to HJ cruciform DNA, conferring on it an open structure. The RuvB hexamer acts as an ATP-dependent pump, pulling dsDNA into and through the RuvAB complex. RuvB forms 2 homohexamers on either side of HJ DNA bound by 1 or 2 RuvA tetramers; 4 subunits per hexamer contact DNA at a time. Coordinated motions by a converter formed by DNA-disengaged RuvB subunits stimulates ATP hydrolysis and nucleotide exchange. Immobilization of the converter enables RuvB to convert the ATP-contained energy into a lever motion, pulling 2 nucleotides of DNA out of the RuvA tetramer per ATP hydrolyzed, thus driving DNA branch migration. The RuvB motors rotate together with the DNA substrate, which together with the progressing nucleotide cycle form the mechanistic basis for DNA recombination by continuous HJ branch migration. Branch migration allows RuvC to scan DNA until it finds its consensus sequence, where it cleaves and resolves cruciform DNA. The protein is Holliday junction branch migration complex subunit RuvB of Azoarcus sp. (strain BH72).